The primary structure comprises 361 residues: Protein RecA (361 aa).

77–84 (GPESSGKT) lines the ATP pocket.

It belongs to the RecA family.

It is found in the cytoplasm. Can catalyze the hydrolysis of ATP in the presence of single-stranded DNA, the ATP-dependent uptake of single-stranded DNA by duplex DNA, and the ATP-dependent hybridization of homologous single-stranded DNAs. It interacts with LexA causing its activation and leading to its autocatalytic cleavage. This Brucella suis (strain ATCC 23445 / NCTC 10510) protein is Protein RecA.